Reading from the N-terminus, the 578-residue chain is PX domain-containing protein kinase-like protein (578 aa).

Positions 14–126 constitute a PX domain; it reads LDDTVPLTAA…KFLDPNNYSA (113 aa). In terms of domain architecture, Protein kinase spans 88–481; the sequence is FIAERQKGLQ…LENSEEHSAK (394 aa). 2 stretches are compositionally biased toward basic residues: residues 437 to 448 and 457 to 469; these read IHQHRRLTRAQS and KKRKILARKKSKR. Disordered stretches follow at residues 437 to 548 and 559 to 578; these read IHQH…NGMS and FQKGTLRKAKTCDHSAPKIG. Low complexity predominate over residues 483-513; the sequence is SNSNNSAGSGASSPLTSPSSPTPPSTSGISA. Pro residues predominate over residues 514-530; the sequence is LPPPPPPPPPPAAPLPP. The 20-residue stretch at 548–567 folds into the WH2 domain; that stretch reads SRGALLSSIQNFQKGTLRKA. The span at 568 to 578 shows a compositional bias: basic and acidic residues; that stretch reads KTCDHSAPKIG.

The protein belongs to the protein kinase superfamily. As to expression, widely expressed in all tissues examined except in heart. Isoform 1 is expressed in high levels in the brain, skeletal muscle, spleen and testis. Isoform 7 expression has yet to be demonstrated.

The protein resides in the cytoplasm. Its subcellular location is the cell membrane. In terms of biological role, binds to and modulates brain Na,K-ATPase subunits ATP1B1 and ATP1B3 and may thereby participate in the regulation of electrical excitability and synaptic transmission. May not display kinase activity. This Homo sapiens (Human) protein is PX domain-containing protein kinase-like protein.